Consider the following 585-residue polypeptide: Organic cation transporter 1 (585 aa).

At 1–40 (MSFQAMETFAEISQEILMSATKPPDFDFVLEQVGNYGTYQ) the chain is on the cytoplasmic side. A helical membrane pass occupies residues 41–61 (IVFFFIICLPTSLPSAFSAFN). Over 62-155 (IPFVVGNPPH…LVCDQQAWIE (94 aa)) the chain is Extracellular. 3 N-linked (GlcNAc...) asparagine glycosylation sites follow: Asn-87, Asn-98, and Asn-133. The helical transmembrane segment at 156–176 (ISTTSFYVGSFIGNCLFGYVA) threads the bilayer. Over 177-184 (DKFGRRRS) the chain is Cytoplasmic. A helical transmembrane segment spans residues 185-205 (FFVILTVLIVCGTASSFAKDI). Topologically, residues 206–212 (ESFIILR) are extracellular. The chain crosses the membrane as a helical span at residues 213–233 (FFTGLAFPALFQIPFIICMEF). Residues 234 to 243 (MGNSGRIFSG) lie on the Cytoplasmic side of the membrane. A helical transmembrane segment spans residues 244-264 (LMTSLFFGAAMALLGVVAMFI). Over 265 to 269 (RRWRQ) the chain is Extracellular. A helical membrane pass occupies residues 270–290 (LTFFCNAPFAFYIIYYFFLPE). At 291–360 (SPRWSVSVGK…FKTPNLRRKT (70 aa)) the chain is on the cytoplasmic side. The chain crosses the membrane as a helical span at residues 361–381 (LIVTYIWVMNAIIYNGLTLNV). At 382–389 (SNLPVDDY) the chain is on the extracellular side. Residues 390 to 410 (WSFIINGAVELPGYFVVWPLL) traverse the membrane as a helical segment. At 411–416 (QCAGRR) the chain is on the cytoplasmic side. The helical transmembrane segment at 417–437 (WTLAATMIVCGIGCVSAMFMP) threads the bilayer. Residues 438-446 (DGYPWLVAS) are Extracellular-facing. A helical transmembrane segment spans residues 447-467 (ASFIGKFGVGSGFAVIYIFAG). The Cytoplasmic segment spans residues 468–476 (ELYPTVVRA). Residues 477 to 497 (IGMGMSSMVAGSGLLLAPHIV) traverse the membrane as a helical segment. The Extracellular segment spans residues 498-504 (NLGKIVK). The helical transmembrane segment at 505 to 525 (ILPLLIMGLMALSAGILTFFL) threads the bilayer. At 526-585 (PETLGAPLPMTIEDAENFGKKPEPDSGMFTQAAKKRESQPLLEPHTPMDRRRRSSRLMNI) the chain is on the cytoplasmic side. The disordered stretch occupies residues 544 to 585 (GKKPEPDSGMFTQAAKKRESQPLLEPHTPMDRRRRSSRLMNI). Residues 575–585 (RRRRSSRLMNI) show a composition bias toward basic residues.

Belongs to the major facilitator (TC 2.A.1) superfamily. Organic cation transporter (TC 2.A.1.19) family.

The protein localises to the membrane. Its function is as follows. Transports organic cations such as tetraethylammonium (TEA). Displays a broad substrate specificity. This Caenorhabditis elegans protein is Organic cation transporter 1 (oct-1).